The following is a 239-amino-acid chain: Aspartate/glutamate leucyltransferase (239 aa).

The protein belongs to the R-transferase family. Bpt subfamily.

It localises to the cytoplasm. It catalyses the reaction N-terminal L-glutamyl-[protein] + L-leucyl-tRNA(Leu) = N-terminal L-leucyl-L-glutamyl-[protein] + tRNA(Leu) + H(+). It carries out the reaction N-terminal L-aspartyl-[protein] + L-leucyl-tRNA(Leu) = N-terminal L-leucyl-L-aspartyl-[protein] + tRNA(Leu) + H(+). Its function is as follows. Functions in the N-end rule pathway of protein degradation where it conjugates Leu from its aminoacyl-tRNA to the N-termini of proteins containing an N-terminal aspartate or glutamate. The protein is Aspartate/glutamate leucyltransferase of Campylobacter jejuni subsp. jejuni serotype O:23/36 (strain 81-176).